The sequence spans 501 residues: Aspartate--tRNA ligase, cytoplasmic (501 aa).

Phosphothreonine is present on T52. K74 carries the N6-acetyllysine modification. E229 lines the L-aspartate pocket. At S249 the chain carries Phosphoserine. Residues 251 to 254 (QLYK) are aspartate. Residue R273 participates in L-aspartate binding. Residues 273–275 (RAE) and 281–283 (RHL) contribute to the ATP site. K374 is subject to N6-acetyllysine. A binding site for the 3'-end of tRNA region spans residues 411 to 415 (KQSNS). Residue E424 participates in ATP binding. S427 and R431 together coordinate L-aspartate. 472–475 (GLER) provides a ligand contact to ATP. The residue at position 500 (T500) is a Phosphothreonine; by PKA.

Belongs to the class-II aminoacyl-tRNA synthetase family. Type 2 subfamily. In terms of assembly, homodimer. Part of a multisubunit complex that groups tRNA ligases for Arg (RARS1), Asp (DARS1), Gln (QARS1), Ile (IARS1), Leu (LARS1), Lys (KARS1), Met (MARS1) the bifunctional ligase for Glu and Pro (EPRS1) and the auxiliary subunits AIMP1/p43, AIMP2/p38 and EEF1E1/p18. Expression in the developing and adult brain shows similar patterns. Highly expressed in the ventricular and subventricular zones, including hippocampal subfields, the midlateral temporal cortex and the frontal polar cortex. The cerebellum, cerebral cortex, hippocampus, and lateral ventricle show preferential neuronal expression. Expression in the peripheral neurons is evident in the colon.

Its subcellular location is the cytoplasm. The protein resides in the cytosol. It carries out the reaction tRNA(Asp) + L-aspartate + ATP = L-aspartyl-tRNA(Asp) + AMP + diphosphate. Its function is as follows. Catalyzes the specific attachment of an amino acid to its cognate tRNA in a 2 step reaction: the amino acid (AA) is first activated by ATP to form AA-AMP and then transferred to the acceptor end of the tRNA. In Homo sapiens (Human), this protein is Aspartate--tRNA ligase, cytoplasmic.